The chain runs to 300 residues: Protein FANTASTIC FOUR 4 (300 aa).

Residues 30–56 show a composition bias toward polar residues; sequence PQLSTPLKSHFQNSSIAPQDNPITINA. 3 disordered regions span residues 30–104, 142–170, and 227–264; these read PQLS…SPSS, TMET…LPPP, and TETK…KEEE. Composition is skewed to low complexity over residues 58 to 88 and 142 to 151; these read SLPS…NSSS and TMETRTTSTT. Positions 166 to 217 constitute an FAF domain; the sequence is SLPPPLTSMIGFDCIEVKSHRENGRLVMMATRPPPRNRCLQDRSNGCVRLAI. The span at 233 to 262 shows a compositional bias: acidic residues; the sequence is KEEEEEETIETVRDNEEEIPEYKEEEEEKE.

The protein belongs to the fantastic four family. As to expression, expressed in the shoot apex and young siliques. Detected in provascular and vascular tissue, but not in the vegetative meristem. In inflorescences, restricted to the base of the flower and to the vasculature of the stem and the pedicels, but absent from young flowers. Detected in the center of the inflorescence meristem.

Its function is as follows. Regulates the size of the shoot meristem by modulating the CLV3-WUS feedback loop. Can repress WUS but is under negative control by CLV3. This is Protein FANTASTIC FOUR 4 (FAF4) from Arabidopsis thaliana (Mouse-ear cress).